The sequence spans 160 residues: Cytochrome b6-f complex subunit 4 (160 aa).

3 consecutive transmembrane segments (helical) span residues 36–56 (LLYI…GLAV), 95–115 (LLGV…PFLE), and 131–151 (TVFL…TLPI).

It belongs to the cytochrome b family. PetD subfamily. The 4 large subunits of the cytochrome b6-f complex are cytochrome b6, subunit IV (17 kDa polypeptide, petD), cytochrome f and the Rieske protein, while the 4 small subunits are petG, petL, petM and petN. The complex functions as a dimer.

Its subcellular location is the plastid. It is found in the chloroplast thylakoid membrane. In terms of biological role, component of the cytochrome b6-f complex, which mediates electron transfer between photosystem II (PSII) and photosystem I (PSI), cyclic electron flow around PSI, and state transitions. The sequence is that of Cytochrome b6-f complex subunit 4 from Sorghum bicolor (Sorghum).